A 95-amino-acid polypeptide reads, in one-letter code: Protein TusB (95 aa).

The protein belongs to the DsrH/TusB family. As to quaternary structure, heterohexamer, formed by a dimer of trimers. The hexameric TusBCD complex contains 2 copies each of TusB, TusC and TusD. The TusBCD complex interacts with TusE.

It is found in the cytoplasm. Functionally, part of a sulfur-relay system required for 2-thiolation of 5-methylaminomethyl-2-thiouridine (mnm(5)s(2)U) at tRNA wobble positions. This Buchnera aphidicola subsp. Schizaphis graminum (strain Sg) protein is Protein TusB.